The sequence spans 237 residues: Large ribosomal subunit protein uL3 (237 aa).

2 disordered regions span residues 133–155 (ASHG…DPGK) and 213–237 (PENA…EGAE). Over residues 135–150 (HGNSITHRSHGSTGQR) the composition is skewed to polar residues. Gln-151 carries the N5-methylglutamine modification. A compositionally biased stretch (low complexity) spans 220–237 (AGLRAGAKAEAAATEGAE).

The protein belongs to the universal ribosomal protein uL3 family. Part of the 50S ribosomal subunit. Forms a cluster with proteins L14 and L19. In terms of processing, methylated by PrmB.

In terms of biological role, one of the primary rRNA binding proteins, it binds directly near the 3'-end of the 23S rRNA, where it nucleates assembly of the 50S subunit. The polypeptide is Large ribosomal subunit protein uL3 (Brucella suis biovar 1 (strain 1330)).